Consider the following 320-residue polypeptide: Probable carboxylesterase M8 (320 aa).

Positions 52–54 (HGG) match the Involved in the stabilization of the negatively charged intermediate by the formation of the oxyanion hole motif. Active-site residues include Ser137 and His296.

Belongs to the 'GDXG' lipolytic enzyme family.

It carries out the reaction a carboxylic ester + H2O = an alcohol + a carboxylate + H(+). It participates in secondary metabolite biosynthesis. In terms of biological role, probable carboxylesterase; part of the gene cluster that mediates the biosynthesis of squalestatin S1 (SQS1, also known as zaragozic acid A), a heavily oxidized fungal polyketide that offers potent cholesterol lowering activity by targeting squalene synthase (SS). SQS1 is composed of a 2,8-dioxobicyclic[3.2.1]octane-3,4,5-tricarboxyclic acid core that is connected to two lipophilic polyketide arms. These initial steps feature the priming of an unusual benzoic acid starter unit onto the highly reducing polyketide synthase pks2, followed by oxaloacetate extension and product release to generate a tricarboxylic acid containing product. The phenylalanine ammonia lyase (PAL) M7 and the acyl-CoA ligase M9 are involved in transforming phenylalanine into benzoyl-CoA. The citrate synthase-like protein R3 is involved in connecting the C-alpha-carbons of the hexaketide chain and oxaloacetate to afford the tricarboxylic acid unit. The potential hydrolytic enzymes, M8 and M10, are in close proximity to pks2 and may participate in product release. On the other side, the tetraketide arm is synthesized by a the squalestatin tetraketide synthase pks1 and enzymatically esterified to the core in the last biosynthetic step, by the acetyltransferase M4. The biosynthesis of the tetraketide must involve 3 rounds of chain extension. After the first and second rounds methyl-transfer occurs, and in all rounds of extension the ketoreductase and dehydratase are active. The enoyl reductase and C-MeT of pks1 are not active in the final round of extension. The acetyltransferase M4 appears to have a broad substrate selectivity for its acyl CoA substrate, allowing the in vitro synthesis of novel squalestatins. The biosynthesis of SQS1 requires several oxidative steps likely performed by oxidoreductases M1, R1 and R2. Finally, in support of the identification of the cluster as being responsible for SQS1 production, the cluster contains a gene encoding a putative squalene synthase (SS) R6, suggesting a likely mechanism for self-resistance. The polypeptide is Probable carboxylesterase M8 (Phoma sp. (strain ATCC 20986 / MF5453)).